A 256-amino-acid polypeptide reads, in one-letter code: Imidazole glycerol phosphate synthase subunit HisF (256 aa).

Active-site residues include Asp-11 and Asp-130.

It belongs to the HisA/HisF family. In terms of assembly, heterodimer of HisH and HisF.

It localises to the cytoplasm. It catalyses the reaction 5-[(5-phospho-1-deoxy-D-ribulos-1-ylimino)methylamino]-1-(5-phospho-beta-D-ribosyl)imidazole-4-carboxamide + L-glutamine = D-erythro-1-(imidazol-4-yl)glycerol 3-phosphate + 5-amino-1-(5-phospho-beta-D-ribosyl)imidazole-4-carboxamide + L-glutamate + H(+). The protein operates within amino-acid biosynthesis; L-histidine biosynthesis; L-histidine from 5-phospho-alpha-D-ribose 1-diphosphate: step 5/9. IGPS catalyzes the conversion of PRFAR and glutamine to IGP, AICAR and glutamate. The HisF subunit catalyzes the cyclization activity that produces IGP and AICAR from PRFAR using the ammonia provided by the HisH subunit. The protein is Imidazole glycerol phosphate synthase subunit HisF of Psychrobacter sp. (strain PRwf-1).